We begin with the raw amino-acid sequence, 178 residues long: MAESTTLARPYAKAAFELARDAGQLSEWSALLALTAAVAGDSNMHKVLNHPALTSAQKGQTFLDVCEGKLNEAGANFVRVLAENNRLVLLPEIAALFEQLKAQQEATIEVTIESAFEMNDEQENKLAQALQKKLSRNVNLRSQLNKELIGGIVVRAGDLVIDASVRGRLAKLAEAVNS.

The protein belongs to the ATPase delta chain family. In terms of assembly, F-type ATPases have 2 components, F(1) - the catalytic core - and F(0) - the membrane proton channel. F(1) has five subunits: alpha(3), beta(3), gamma(1), delta(1), epsilon(1). F(0) has three main subunits: a(1), b(2) and c(10-14). The alpha and beta chains form an alternating ring which encloses part of the gamma chain. F(1) is attached to F(0) by a central stalk formed by the gamma and epsilon chains, while a peripheral stalk is formed by the delta and b chains.

The protein localises to the cell inner membrane. F(1)F(0) ATP synthase produces ATP from ADP in the presence of a proton or sodium gradient. F-type ATPases consist of two structural domains, F(1) containing the extramembraneous catalytic core and F(0) containing the membrane proton channel, linked together by a central stalk and a peripheral stalk. During catalysis, ATP synthesis in the catalytic domain of F(1) is coupled via a rotary mechanism of the central stalk subunits to proton translocation. In terms of biological role, this protein is part of the stalk that links CF(0) to CF(1). It either transmits conformational changes from CF(0) to CF(1) or is implicated in proton conduction. The chain is ATP synthase subunit delta from Hahella chejuensis (strain KCTC 2396).